The primary structure comprises 214 residues: Pyridoxine/pyridoxamine 5'-phosphate oxidase (214 aa).

Substrate-binding positions include R8–Y11 and K66. FMN is bound by residues R61–K66, F76–T77, R82, K83, and Q105. The substrate site is built by Y123, R127, and S131. Residues Q140–S141 and W184 each bind FMN. R190 to H192 contributes to the substrate binding site. R194 is an FMN binding site.

The protein belongs to the pyridoxamine 5'-phosphate oxidase family. Homodimer. FMN serves as cofactor.

It carries out the reaction pyridoxamine 5'-phosphate + O2 + H2O = pyridoxal 5'-phosphate + H2O2 + NH4(+). The enzyme catalyses pyridoxine 5'-phosphate + O2 = pyridoxal 5'-phosphate + H2O2. Its pathway is cofactor metabolism; pyridoxal 5'-phosphate salvage; pyridoxal 5'-phosphate from pyridoxamine 5'-phosphate: step 1/1. It participates in cofactor metabolism; pyridoxal 5'-phosphate salvage; pyridoxal 5'-phosphate from pyridoxine 5'-phosphate: step 1/1. Its function is as follows. Catalyzes the oxidation of either pyridoxine 5'-phosphate (PNP) or pyridoxamine 5'-phosphate (PMP) into pyridoxal 5'-phosphate (PLP). The protein is Pyridoxine/pyridoxamine 5'-phosphate oxidase of Burkholderia orbicola (strain MC0-3).